A 382-amino-acid chain; its full sequence is F-box protein At3g19470 (382 aa).

Residues 1 to 44 (MYNLPRDLPEEVLCRIPLTSLRPVRSTCKKWSTLSKCGSFAKKH) form the F-box domain.

This chain is F-box protein At3g19470, found in Arabidopsis thaliana (Mouse-ear cress).